The sequence spans 102 residues: Large ribosomal subunit protein uL24 (102 aa).

This sequence belongs to the universal ribosomal protein uL24 family. In terms of assembly, part of the 50S ribosomal subunit.

Functionally, one of two assembly initiator proteins, it binds directly to the 5'-end of the 23S rRNA, where it nucleates assembly of the 50S subunit. In terms of biological role, one of the proteins that surrounds the polypeptide exit tunnel on the outside of the subunit. The polypeptide is Large ribosomal subunit protein uL24 (Cupriavidus necator (strain ATCC 17699 / DSM 428 / KCTC 22496 / NCIMB 10442 / H16 / Stanier 337) (Ralstonia eutropha)).